Reading from the N-terminus, the 367-residue chain is tRNA-specific 2-thiouridylase MnmA (367 aa).

ATP is bound by residues 12–19 (GMSGGVDS) and methionine 38. Residues 98–100 (NPD) form an interaction with target base in tRNA region. Catalysis depends on cysteine 103, which acts as the Nucleophile. A disulfide bridge links cysteine 103 with cysteine 200. Residue glycine 128 coordinates ATP. The tract at residues 150-152 (KDQ) is interaction with tRNA. The active-site Cysteine persulfide intermediate is cysteine 200. Residues 312-313 (RY) are interaction with tRNA.

It belongs to the MnmA/TRMU family. As to quaternary structure, interacts with TusE.

Its subcellular location is the cytoplasm. It carries out the reaction S-sulfanyl-L-cysteinyl-[protein] + uridine(34) in tRNA + AH2 + ATP = 2-thiouridine(34) in tRNA + L-cysteinyl-[protein] + A + AMP + diphosphate + H(+). Catalyzes the 2-thiolation of uridine at the wobble position (U34) of tRNA(Lys), tRNA(Glu) and tRNA(Gln), leading to the formation of s(2)U34, the first step of tRNA-mnm(5)s(2)U34 synthesis. Sulfur is provided by IscS, via a sulfur-relay system. Binds ATP and its substrate tRNAs. This is tRNA-specific 2-thiouridylase MnmA from Serratia proteamaculans (strain 568).